The chain runs to 322 residues: Sideroflexin-1 (322 aa).

Position 2 is an N-acetylserine (Ser2). The Mitochondrial matrix segment spans residues 2–102; the sequence is SGELPPNINI…MSAQVPMNMT (101 aa). The chain crosses the membrane as a helical span at residues 103 to 120; sequence ITGCMMTFYRTTPAVLFW. Residues 121–146 lie on the Mitochondrial intermembrane side of the membrane; sequence QWVNQSFNAVVNYTNRSGDAPLTVNE. A helical transmembrane segment spans residues 147-167; sequence LGTAYVSATTGAVATALGLNA. The Mitochondrial matrix portion of the chain corresponds to 168–174; the sequence is LTKRVSP. The helical transmembrane segment at 175 to 195 threads the bilayer; sequence LVGRFVPFAAVAAANCINIPL. The Mitochondrial intermembrane portion of the chain corresponds to 196 to 228; sequence MRQRELKVGIPVTDENGNRLGESASAAKQAITQ. Residues 229–249 traverse the membrane as a helical segment; the sequence is VVVSRILMAAPGMAIPPFIMN. Residues 250–266 are Mitochondrial matrix-facing; sequence TLEKKAFLKRFPWMSAP. Residues 267–287 traverse the membrane as a helical segment; that stretch reads VQVGIVGFCLVFATPLCCALF. At 288–322 the chain is on the mitochondrial intermembrane side; it reads PQKSSMSVTSLEAELQARIRETYPELRRVYFNKGL.

It belongs to the sideroflexin family.

The protein resides in the mitochondrion inner membrane. It catalyses the reaction L-serine(in) = L-serine(out). It carries out the reaction L-alanine(in) = L-alanine(out). The catalysed reaction is L-cysteine(in) = L-cysteine(out). Its function is as follows. Amino acid transporter importing serine, an essential substrate of the mitochondrial branch of the one-carbon pathway, into mitochondria. Mitochondrial serine is then converted to glycine and formate, which exits to the cytosol where it is used to generate the charged folates that serve as one-carbon donors. May also transport other amino acids including alanine and cysteine. The sequence is that of Sideroflexin-1 (SFXN1) from Ovis aries (Sheep).